The primary structure comprises 217 residues: Small ribosomal subunit protein uS3 (217 aa).

Residues 29-97 (ADYLHEDLAI…AQLNKLTGKQ (69 aa)) form the KH type-2 domain.

It belongs to the universal ribosomal protein uS3 family. In terms of assembly, part of the 30S ribosomal subunit. Forms a tight complex with proteins S10 and S14.

Functionally, binds the lower part of the 30S subunit head. Binds mRNA in the 70S ribosome, positioning it for translation. The chain is Small ribosomal subunit protein uS3 from Streptococcus mutans serotype c (strain ATCC 700610 / UA159).